Consider the following 407-residue polypeptide: Phosphoglycerate kinase (407 aa).

Substrate contacts are provided by residues 24 to 26 (DFN), Arg-40, 63 to 66 (HLGR), Arg-121, and Arg-154. ATP contacts are provided by residues Lys-205, Glu-337, and 363–366 (GGDS).

This sequence belongs to the phosphoglycerate kinase family. As to quaternary structure, monomer.

It localises to the cytoplasm. It carries out the reaction (2R)-3-phosphoglycerate + ATP = (2R)-3-phospho-glyceroyl phosphate + ADP. The protein operates within carbohydrate degradation; glycolysis; pyruvate from D-glyceraldehyde 3-phosphate: step 2/5. The chain is Phosphoglycerate kinase from Gloeobacter violaceus (strain ATCC 29082 / PCC 7421).